A 433-amino-acid chain; its full sequence is Schlafen-like protein 2 (433 aa).

Residues methionine 1–phenylalanine 168 form the B30.2/SPRY domain. An SLFN-like fold region spans residues glutamate 199 to tyrosine 400. Residues glutamate 211 and glutamate 216 contribute to the active site.

It belongs to the Schlafen family. Component of the trimeric PUCH (precursor of 21U RNA 5'-end cleavage holoenzyme) complex; consisting of tofu-1, tofu-2 and either slfl-3 or slfl-4. Within the complex, interacts (via N-terminus) with tofu-1 (via N-terminus); the interaction stabilizes tofu-2 and may form a functional nuclease. Within the complex, interacts (via N-terminus) with slfl-3 (via N-terminus); the presence of tofu-1 is required for this interaction. The cofactor is Mg(2+). In terms of tissue distribution, expressed in the germline.

The protein localises to the cytoplasm. Its subcellular location is the mitochondrion. Its activity is regulated as follows. Inhibited by ethylenediaminetetraacetic acid (EDTA). In terms of biological role, component of the trimeric PUCH (precursor of 21U RNA 5'-end cleavage holoenzyme) complex, that acts as an endoribonuclease processing the 5'-end of precursor Piwi-interacting RNAs (piRNAs). The PUCH complex consists of tofu-1, tofu-2 and either slfl-3 or slfl-4, with tofu-2 exhibiting endoribonuclease activity. PUCH-mediated processing strictly requires a 7-methyl-G cap (m7 G-cap) and an uracil at position three (U3). PUCH also exhibits a strict bias for piRNA precursors with an A or G at position 1. Mature piRNA production is enhanced by the interaction of PUCH with the PETISCO complex, which is stabilizing piRNA precursors and allows their processing by PUCH. The polypeptide is Schlafen-like protein 2 (Caenorhabditis elegans).